The chain runs to 441 residues: Inner kinetochore subunit mis17 (441 aa).

Over residues 160–173 (SSILENSPPNKVQR) the composition is skewed to polar residues. The interval 160 to 240 (SSILENSPPN…TSSMAPRNLL (81 aa)) is disordered. Residues 174 to 183 (LSSLDSSQDS) show a composition bias toward low complexity. Residues 192–201 (VTGTTFSSQA) are compositionally biased toward polar residues. Residues 217-233 (SLTNQSSSLQSSLQTSS) show a composition bias toward low complexity.

This sequence belongs to the CENP-U/AME1 family. In terms of assembly, component of the heterotetrameric kinetochore subcomplex COMA, which consists of fta2, fta7, mal2 and mis17. The COMA subcomplex is part of a larger constitutive centromere-associated network (CCAN) (also known as central kinetochore Sim4 complex in fission yeast), which is composed of at least cnl2, cnp3, cnp20, fta1, fta2, fta3, fta4, fta6, fta7, mal2, mhf1, mhf2, mis6, mis15, mis17, sim4 and wip1. Interacts with mis6 and mis15.

The protein resides in the nucleus. The protein localises to the chromosome. It localises to the centromere. It is found in the kinetochore. Functionally, component of the kinetochore, a multiprotein complex that assembles on centromeric DNA and attaches chromosomes to spindle microtubules, mediating chromosome segregation and sister chromatid segregation during meiosis and mitosis. Component of the inner kinetochore COMA complex, which connects centromere-associated proteins and the outer kinetochore. COMA interacts with other inner kinetochore proteins to form the inner kinetochore constitutive centromere-associated network (CCAN), which serves as a structural platform for outer kinetochore assembly. This Schizosaccharomyces pombe (strain 972 / ATCC 24843) (Fission yeast) protein is Inner kinetochore subunit mis17 (mis17).